The chain runs to 217 residues: ATP phosphoribosyltransferase (217 aa).

The protein belongs to the ATP phosphoribosyltransferase family. Short subfamily. In terms of assembly, heteromultimer composed of HisG and HisZ subunits.

The protein localises to the cytoplasm. It catalyses the reaction 1-(5-phospho-beta-D-ribosyl)-ATP + diphosphate = 5-phospho-alpha-D-ribose 1-diphosphate + ATP. It participates in amino-acid biosynthesis; L-histidine biosynthesis; L-histidine from 5-phospho-alpha-D-ribose 1-diphosphate: step 1/9. Catalyzes the condensation of ATP and 5-phosphoribose 1-diphosphate to form N'-(5'-phosphoribosyl)-ATP (PR-ATP). Has a crucial role in the pathway because the rate of histidine biosynthesis seems to be controlled primarily by regulation of HisG enzymatic activity. The sequence is that of ATP phosphoribosyltransferase from Syntrophomonas wolfei subsp. wolfei (strain DSM 2245B / Goettingen).